The chain runs to 510 residues: NAD(P)H-quinone oxidoreductase subunit 2 A, chloroplastic (510 aa).

13 consecutive transmembrane segments (helical) span residues 24–44 (LLLF…GLIL), 57–77 (IPWL…ALLF), 99–119 (IFQF…VEYI), 124–144 (MAIT…MFLC), 149–169 (LITI…LSGY), 183–203 (YLLM…WLYG), 229–249 (ISIA…PAPF), 295–315 (WHLL…LIAI), 323–343 (MLAY…IVGD), 354–374 (YMLF…LFGL), 395–415 (ALSS…AGFF), 418–438 (LYLF…IGLL), and 484–504 (MILC…IIAI).

It belongs to the complex I subunit 2 family. NDH is composed of at least 16 different subunits, 5 of which are encoded in the nucleus.

It is found in the plastid. Its subcellular location is the chloroplast thylakoid membrane. The catalysed reaction is a plastoquinone + NADH + (n+1) H(+)(in) = a plastoquinol + NAD(+) + n H(+)(out). The enzyme catalyses a plastoquinone + NADPH + (n+1) H(+)(in) = a plastoquinol + NADP(+) + n H(+)(out). In terms of biological role, NDH shuttles electrons from NAD(P)H:plastoquinone, via FMN and iron-sulfur (Fe-S) centers, to quinones in the photosynthetic chain and possibly in a chloroplast respiratory chain. The immediate electron acceptor for the enzyme in this species is believed to be plastoquinone. Couples the redox reaction to proton translocation, and thus conserves the redox energy in a proton gradient. In Piper cenocladum (Ant piper), this protein is NAD(P)H-quinone oxidoreductase subunit 2 A, chloroplastic.